The chain runs to 249 residues: Proteasome subunit alpha type-3 (249 aa).

An N-acetylserine modification is found at S2. 2 positions are modified to O-acetylserine: S214 and S220. A Glycyl lysine isopeptide (Lys-Gly) (interchain with G-Cter in ubiquitin) cross-link involves residue K221.

This sequence belongs to the peptidase T1A family. As to quaternary structure, component of the 20S core complex of the 26S proteasome. The 26S proteasome is composed of a core protease (CP), known as the 20S proteasome, capped at one or both ends by the 19S regulatory particle (RP/PA700). The 20S proteasome core is composed of 28 subunits that are arranged in four stacked rings, resulting in a barrel-shaped structure. The two end rings are each formed by seven alpha subunits, and the two central rings are each formed by seven beta subunits. The catalytic chamber with the active sites is on the inside of the barrel. In terms of tissue distribution, ubiquitous low levels.

It is found in the cytoplasm. Its subcellular location is the nucleus. In terms of biological role, the proteasome is a multicatalytic proteinase complex which is characterized by its ability to cleave peptides with Arg, Phe, Tyr, Leu, and Glu adjacent to the leaving group at neutral or slightly basic pH. The proteasome has an ATP-dependent proteolytic activity. The protein is Proteasome subunit alpha type-3 (PAG1) of Arabidopsis thaliana (Mouse-ear cress).